The primary structure comprises 289 residues: CBY1-interacting BAR domain-containing protein 1 (289 aa).

The N-terminal 47 residues, methionine 1–lysine 47, are a transit peptide targeting the mitochondrion. Residues asparagine 10–valine 220 are BAR-like. The stretch at lysine 107 to lysine 178 forms a coiled coil. Positions leucine 265–lysine 289 are disordered. Positions alanine 271–lysine 289 are enriched in acidic residues.

Belongs to the CIBAR family. Homodimer (via BAR-like domain). Heterodimer with FAM92B (via BAR-like domains). Interacts (via BAR-like domain) with CBY1; this interaction is required for targeting FAM92A to centriole and cilium basal body. Interacts (via BAR-like domain) with CBY3; both proteins form a ninefold symmetric structure at the flagellar base; are recruited to the annulus in a mutually dependent manner and regulate annulus positionning.

The protein resides in the cytoplasm. It localises to the cytoskeleton. Its subcellular location is the microtubule organizing center. It is found in the centrosome. The protein localises to the centriole. The protein resides in the cilium basal body. It localises to the cell projection. Its subcellular location is the cilium. It is found in the nucleus. The protein localises to the mitochondrion inner membrane. The protein resides in the flagellum. Functionally, plays a critical role in regulating mitochondrial ultrastructure and function by maintaining the integrity of mitochondrial morphology, particularly the organization of cristae. Preferentially binds to negatively charged phospholipids like cardiolipin and phosphatidylinositol 4,5-bisphosphate enhancing its interaction with mitochondrial membranes. Induces membrane curvature and tubulation, which are critical for maintaining mitochondrial ultrastructure and the organization of cristae. Plays a crucial role in ciliogenesis. May play a role in limb development through its role in ciliogenesis. Plays a key role in the correct positioning of the annulus, a septin-based ring structure in the sperm flagellum, serving both as a physical barrier and a membrane diffusion barrier that separates the midpiece (MP) from the principal piece (PP). This positioning is essential for proper sperm motility and function. Interacts with CBY3 to form a complex which localizes to the curved membrane region of the flagellar pocket. By doing so, may provide stability and rigidity to the periannular membrane to prevent membrane deformation. This function is crucial for halting annulus migration at the proximal end of the fibrous sheath-containing PP. The chain is CBY1-interacting BAR domain-containing protein 1 from Homo sapiens (Human).